Here is a 1723-residue protein sequence, read N- to C-terminus: Probable outer membrane protein pmp20 (1723 aa).

A signal peptide spans 1-21 (MKWLPATAVFAAVLPALTAFG). Disordered stretches follow at residues 78–100 (VTPD…SGAT) and 139–161 (LSSS…SASA). 2 stretches are compositionally biased toward low complexity: residues 85-100 (SSSN…SGAT) and 140-161 (SSSS…SASA). The Autotransporter domain occupies 1434-1723 (EDPAFNNFWA…MANGGIRFVF (290 aa)).

This sequence belongs to the PMP outer membrane protein family.

It localises to the secreted. The protein resides in the cell wall. It is found in the cell outer membrane. This is Probable outer membrane protein pmp20 (pmp20) from Chlamydia pneumoniae (Chlamydophila pneumoniae).